The primary structure comprises 64 residues: Defensin-like protein 41 (64 aa).

A disordered region spans residues 1-21 (MTQGKRKHPCDLKNPSKRAPP). 4 disulfides stabilise this stretch: cysteine 10-cysteine 61, cysteine 24-cysteine 47, cysteine 33-cysteine 56, and cysteine 37-cysteine 58.

It belongs to the DEFL family.

This is Defensin-like protein 41 from Arabidopsis thaliana (Mouse-ear cress).